The chain runs to 254 residues: MASLPSQSCCYQGFRHSGAPKGTLSMVKDIEVYTSYPPDKSTEYGVLILTDIVGHRFSNAQIIADQFAENGYFVMMPDLFLGDAVPLNKPGEFDMGKWRSGAYHPQGKNHLPETVDPIVEVCLSEMRSKYQCKKIGAVGYCFGGKYVVRHLIPGKMDVGYTAHPSHIDESELKGIKGPLAIAAAAKDNIFPAEKRHVSEEILQEVGFPYQINLYSGVSHGFGVRGDMNAGEVRYAMRSAFVQAVEWFNEYMKEK.

Active-site residues include Cys141, Asp187, and His219.

The protein belongs to the dienelactone hydrolase family.

The protein operates within secondary metabolite biosynthesis. Hydrolase; part of the gene cluster that mediates the biosynthesis of the tropolone class of fungal maleic anhydrides. The pathway begins with the synthesis of 3-methylorcinaldehyde by the non-reducing polyketide synthase (PKS) tropA. 3-methylorcinaldehyde is the substrate for the FAD-dependent monooxygenase tropB to yield a dearomatized hydroxycyclohexadione. The 2-oxoglutarate-dependent dioxygenase tropC then performs the oxidative ring expansion to provide the first tropolone metabolite stipitaldehyde. Trop D converts stipitaldehyde into stipitacetal which is in turn converted to stipitalide by the short-chain dehydrogenase/reductase tropE. The next steps involve tropF, tropG, tropH, tropI and tropJ to form successive tropolone maleic anhydrides including stipitaldehydic, stipitatonic and stipitatic acids. The sequence is that of Hydrolase tropI from Talaromyces stipitatus (strain ATCC 10500 / CBS 375.48 / QM 6759 / NRRL 1006) (Penicillium stipitatum).